Consider the following 135-residue polypeptide: Holo-[acyl-carrier-protein] synthase (135 aa).

Mg(2+) is bound by residues D8 and E58.

It belongs to the P-Pant transferase superfamily. AcpS family. The cofactor is Mg(2+).

It is found in the cytoplasm. It carries out the reaction apo-[ACP] + CoA = holo-[ACP] + adenosine 3',5'-bisphosphate + H(+). In terms of biological role, transfers the 4'-phosphopantetheine moiety from coenzyme A to a Ser of acyl-carrier-protein. The sequence is that of Holo-[acyl-carrier-protein] synthase from Leuconostoc citreum (strain KM20).